The sequence spans 362 residues: Methylthioribose-1-phosphate isomerase (362 aa).

Substrate contacts are provided by residues 53 to 55 (RGA), Arg90, and Gln201. Asp242 serves as the catalytic Proton donor. Position 252–253 (252–253 (NK)) interacts with substrate.

It belongs to the eIF-2B alpha/beta/delta subunits family. MtnA subfamily.

The catalysed reaction is 5-(methylsulfanyl)-alpha-D-ribose 1-phosphate = 5-(methylsulfanyl)-D-ribulose 1-phosphate. It functions in the pathway amino-acid biosynthesis; L-methionine biosynthesis via salvage pathway; L-methionine from S-methyl-5-thio-alpha-D-ribose 1-phosphate: step 1/6. Catalyzes the interconversion of methylthioribose-1-phosphate (MTR-1-P) into methylthioribulose-1-phosphate (MTRu-1-P). This Paramagnetospirillum magneticum (strain ATCC 700264 / AMB-1) (Magnetospirillum magneticum) protein is Methylthioribose-1-phosphate isomerase.